We begin with the raw amino-acid sequence, 226 residues long: MKAIKIAIDGPASSGKSTVAKIIAKNLGYTYLDTGAMYRSATYIALTHGYTGKEVALILEELEKNPISFKKAKDGSQLVFLGDEDVTLAIRQNDVTNNVSWVSALPEIREELVHQQRRIAQAGGIIMDGRDIGTVVLPDAELKIFLVASVEERAERRYKENLEKGIESDFETLKEEIAARDYKDSHRKVSPLKSAEDALIFDTTGVSIDGVVQFIQEKAEKIVDMS.

10-18 provides a ligand contact to ATP; it reads GPASSGKST.

It belongs to the cytidylate kinase family. Type 1 subfamily.

It localises to the cytoplasm. The enzyme catalyses CMP + ATP = CDP + ADP. It catalyses the reaction dCMP + ATP = dCDP + ADP. The polypeptide is Cytidylate kinase (Streptococcus pyogenes serotype M4 (strain MGAS10750)).